The primary structure comprises 101 residues: Small ribosomal subunit protein uS14 (101 aa).

Belongs to the universal ribosomal protein uS14 family. As to quaternary structure, part of the 30S ribosomal subunit. Contacts proteins S3 and S10.

Its function is as follows. Binds 16S rRNA, required for the assembly of 30S particles and may also be responsible for determining the conformation of the 16S rRNA at the A site. The polypeptide is Small ribosomal subunit protein uS14 (Photobacterium profundum (strain SS9)).